The primary structure comprises 978 residues: Glycine dehydrogenase (decarboxylating) (978 aa).

Lysine 726 carries the N6-(pyridoxal phosphate)lysine modification.

Belongs to the GcvP family. In terms of assembly, the glycine cleavage system is composed of four proteins: P, T, L and H. Pyridoxal 5'-phosphate is required as a cofactor.

The catalysed reaction is N(6)-[(R)-lipoyl]-L-lysyl-[glycine-cleavage complex H protein] + glycine + H(+) = N(6)-[(R)-S(8)-aminomethyldihydrolipoyl]-L-lysyl-[glycine-cleavage complex H protein] + CO2. The glycine cleavage system catalyzes the degradation of glycine. The P protein binds the alpha-amino group of glycine through its pyridoxal phosphate cofactor; CO(2) is released and the remaining methylamine moiety is then transferred to the lipoamide cofactor of the H protein. This chain is Glycine dehydrogenase (decarboxylating), found in Paraburkholderia xenovorans (strain LB400).